A 551-amino-acid chain; its full sequence is Pentatricopeptide repeat-containing protein At3g13150 (551 aa).

The segment at 22 to 67 is disordered; sequence ATAKSAKPRSQTKSTKFPSKLKASTASVGDGGQSSNDAKDSKNSKL. Polar residues predominate over residues 29-48; it reads PRSQTKSTKFPSKLKASTAS. The segment covering 58–67 has biased composition (basic and acidic residues); the sequence is DAKDSKNSKL. PPR repeat units lie at residues 121 to 155, 156 to 191, 192 to 226, 227 to 261, 262 to 296, 297 to 331, and 332 to 366; these read SEDF…NCER, TVKS…GITP, DLVT…GFEP, DLIS…NLSP, NIRS…GISP, DVHT…GLTP, and DTVT…KLLS. Disordered stretches follow at residues 409 to 435 and 449 to 551; these read GKKK…SPDT and SSSD…LLDD. The segment covering 415-435 has biased composition (low complexity); sequence SSPVSSSAKTTSTPVSSSPDT.

It belongs to the PPR family. P subfamily.

This is Pentatricopeptide repeat-containing protein At3g13150 from Arabidopsis thaliana (Mouse-ear cress).